Here is a 387-residue protein sequence, read N- to C-terminus: 3-ketoacyl-CoA thiolase (387 aa).

Cys-91 acts as the Acyl-thioester intermediate in catalysis. Catalysis depends on proton acceptor residues His-343 and Cys-373.

This sequence belongs to the thiolase-like superfamily. Thiolase family. As to quaternary structure, heterotetramer of two alpha chains (FadB) and two beta chains (FadA).

It is found in the cytoplasm. The catalysed reaction is an acyl-CoA + acetyl-CoA = a 3-oxoacyl-CoA + CoA. Its pathway is lipid metabolism; fatty acid beta-oxidation. Functionally, catalyzes the final step of fatty acid oxidation in which acetyl-CoA is released and the CoA ester of a fatty acid two carbons shorter is formed. This chain is 3-ketoacyl-CoA thiolase, found in Shigella sonnei (strain Ss046).